The following is an 87-amino-acid chain: Kappa 1b-bungarotoxin (87 aa).

The signal sequence occupies residues 1–21; sequence MKTLLLTLVVVTIVCLDLGYT. 5 disulfides stabilise this stretch: Cys24–Cys42, Cys35–Cys63, Cys48–Cys52, Cys67–Cys79, and Cys80–Cys85.

The protein belongs to the three-finger toxin family. Long-chain subfamily. Kappa-neurotoxin sub-subfamily. As to quaternary structure, homo- and heterodimer; non-covalently linked. As to expression, expressed by the venom gland.

It localises to the secreted. Its function is as follows. Postsynaptic neurotoxin that binds and inhibits neuronal nicotinic acetylcholine receptors (nAChR) with high affinity (IC(50)&lt;100 nM). Is a selective, and slowly reversible antagonist of alpha-3/CHRNA3-containing and some alpha-4/CHRNA4-containing AChRs. This Bungarus candidus (Malayan krait) protein is Kappa 1b-bungarotoxin.